The chain runs to 992 residues: Disks large-associated protein 4 (992 aa).

A compositionally biased stretch (basic and acidic residues) spans 1–20 (MKGLGDSRPRHLSDSLDPPH). Disordered stretches follow at residues 1 to 30 (MKGLGDSRPRHLSDSLDPPHEPLFAGTDRN), 47 to 66 (PGQNTLPGDGLFPLNNQLPP), and 157 to 206 (LEGT…GWWS). The span at 162–171 (GKVGGNGSKK) shows a compositional bias: gly residues. Residues 172 to 194 (GGMEDGKGRRAKSKERAKAGEPK) show a composition bias toward basic and acidic residues. Phosphoserine is present on residues serine 206 and serine 207. An Omega-N-methylarginine modification is found at arginine 291. A disordered region spans residues 342–396 (STTLLSPRETDAAAEGPIPCRRMRSGSYIKAMGDEDSDESGGSPKPSPKTAARRQ). A phosphoserine mark is found at serine 378, serine 381, serine 388, serine 405, serine 415, and serine 421. Disordered regions lie at residues 527–751 (SVSL…GPRQ), 763–798 (SYGDNSDPALEASSLPPPDPWLETSSSSPAEPAQPG), and 915–992 (TPEK…QTRL). Low complexity predominate over residues 528 to 554 (VSLQSLSPPPSTGSLSNSRTLPSSSCL). The span at 576 to 591 (VTVQSSTESAQDTYLD) shows a compositional bias: polar residues. Phosphoserine is present on residues serine 580, serine 581, serine 609, serine 611, serine 665, and serine 744. Over residues 600–620 (TSQSGLSNSSDSLDSSTRPPS) the composition is skewed to low complexity. Threonine 915 is modified (phosphothreonine). Basic and acidic residues-rich tracts occupy residues 915-925 (TPEKRKEEKKP) and 940-958 (VSRDKASDASDKQRQEARK). Polar residues predominate over residues 969 to 978 (VRQNSATESA). Serine 973 bears the Phosphoserine mark.

Belongs to the SAPAP family. As to quaternary structure, interacts with DLG1 and DLG4/PSD-95.

It is found in the membrane. May play a role in the molecular organization of synapses and neuronal cell signaling. Could be an adapter protein linking ion channel to the subsynaptic cytoskeleton. May induce enrichment of PSD-95/SAP90 at the plasma membrane. The protein is Disks large-associated protein 4 (DLGAP4) of Homo sapiens (Human).